The sequence spans 213 residues: Orotate phosphoribosyltransferase (213 aa).

A 5-phospho-alpha-D-ribose 1-diphosphate-binding site is contributed by Lys26. 34–35 (FF) serves as a coordination point for orotate. 5-phospho-alpha-D-ribose 1-diphosphate is bound by residues 72–73 (YK), Arg99, Lys100, Lys103, His105, and 124–132 (DDVITAGTA). Residues Thr128 and Arg156 each contribute to the orotate site.

This sequence belongs to the purine/pyrimidine phosphoribosyltransferase family. PyrE subfamily. In terms of assembly, homodimer. The cofactor is Mg(2+).

The catalysed reaction is orotidine 5'-phosphate + diphosphate = orotate + 5-phospho-alpha-D-ribose 1-diphosphate. Its pathway is pyrimidine metabolism; UMP biosynthesis via de novo pathway; UMP from orotate: step 1/2. Catalyzes the transfer of a ribosyl phosphate group from 5-phosphoribose 1-diphosphate to orotate, leading to the formation of orotidine monophosphate (OMP). This Shigella flexneri serotype 5b (strain 8401) protein is Orotate phosphoribosyltransferase.